The sequence spans 467 residues: Light-independent protochlorophyllide reductase subunit N (467 aa).

The [4Fe-4S] cluster site is built by cysteine 23, cysteine 48, and cysteine 108.

This sequence belongs to the BchN/ChlN family. As to quaternary structure, protochlorophyllide reductase is composed of three subunits; ChlL, ChlN and ChlB. Forms a heterotetramer of two ChlB and two ChlN subunits. [4Fe-4S] cluster is required as a cofactor.

It carries out the reaction chlorophyllide a + oxidized 2[4Fe-4S]-[ferredoxin] + 2 ADP + 2 phosphate = protochlorophyllide a + reduced 2[4Fe-4S]-[ferredoxin] + 2 ATP + 2 H2O. Its pathway is porphyrin-containing compound metabolism; chlorophyll biosynthesis (light-independent). Functionally, component of the dark-operative protochlorophyllide reductase (DPOR) that uses Mg-ATP and reduced ferredoxin to reduce ring D of protochlorophyllide (Pchlide) to form chlorophyllide a (Chlide). This reaction is light-independent. The NB-protein (ChlN-ChlB) is the catalytic component of the complex. The polypeptide is Light-independent protochlorophyllide reductase subunit N (Trichormus variabilis (strain ATCC 29413 / PCC 7937) (Anabaena variabilis)).